The following is a 60-amino-acid chain: Large ribosomal subunit protein bL32 (60 aa).

Residues 1-43 (MAVQQNRKTRSRRGMRRSHDALTGKTLSVDSTTGEKHLRHHVT) are disordered. The segment covering 7 to 16 (RKTRSRRGMR) has biased composition (basic residues).

It belongs to the bacterial ribosomal protein bL32 family.

This is Large ribosomal subunit protein bL32 from Saccharophagus degradans (strain 2-40 / ATCC 43961 / DSM 17024).